The chain runs to 347 residues: NADH-ubiquinone oxidoreductase chain 2 (347 aa).

Transmembrane regions (helical) follow at residues 1–21 (MNPL…GIVM), 25–45 (HWLT…PILM), 59–79 (YFLT…INLV), 96–116 (IILT…FWVP), 122–142 (VHLP…MSVL), 148–168 (MINL…GGWG), 200–220 (MALL…LTFM), 240–260 (ITTI…LSGF), 274–294 (NSII…FFYM), and 325–345 (LLSP…MLML).

This sequence belongs to the complex I subunit 2 family. As to quaternary structure, core subunit of respiratory chain NADH dehydrogenase (Complex I) which is composed of 45 different subunits. Interacts with TMEM242.

The protein localises to the mitochondrion inner membrane. It carries out the reaction a ubiquinone + NADH + 5 H(+)(in) = a ubiquinol + NAD(+) + 4 H(+)(out). Functionally, core subunit of the mitochondrial membrane respiratory chain NADH dehydrogenase (Complex I) which catalyzes electron transfer from NADH through the respiratory chain, using ubiquinone as an electron acceptor. Essential for the catalytic activity and assembly of complex I. The sequence is that of NADH-ubiquinone oxidoreductase chain 2 from Thoopterus nigrescens (Swift fruit bat).